The primary structure comprises 149 residues: RALGPLIPSRLFDQFFGEGLLEYDLLPLFSSTISPYYRQSLFRSVLESGISEVRSDRDKFTIMLDVKHFSPEDLSVKIIDDFVEIHGKHSERQDDHGYISREFHRRYRLPANVDQSAITCSLSGDGMLTFSGPKVPSNMDPTHSERPIP.

The region spanning 41–149 (LFRSVLESGI…DPTHSERPIP (109 aa)) is the sHSP domain. Zn(2+)-binding residues include H89, E91, H96, and H143.

It belongs to the small heat shock protein (HSP20) family. As to quaternary structure, heteropolymer composed of three CRYAA and one CRYAB subunits. Inter-subunit bridging via zinc ions enhances stability, which is crucial as there is no protein turn over in the lens. Can also form homodimers and homotetramers (dimers of dimers) which serve as the building blocks of homooligomers. Within homooligomers, the zinc-binding motif is created from residues of 3 different molecules. His-89 and Glu-91 from one molecule are ligands of the zinc ion, and His-96 and His-143 residues from additional molecules complete the site with tetrahedral coordination geometry.

The protein resides in the cytoplasm. The protein localises to the nucleus. In terms of biological role, contributes to the transparency and refractive index of the lens. May act as a chaperone, preventing aggregation of various proteins under a wide range of stress conditions. In Anas platyrhynchos (Mallard), this protein is Alpha-crystallin A chain (CRYAA).